The primary structure comprises 1187 residues: DNA-directed RNA polymerase subunit beta (1187 aa).

The interval 1150-1187 (KDEDDDPASSADDLGFNIGARPDAAAKEDQKAEEPEYQ) is disordered. Residues 1173–1187 (AAAKEDQKAEEPEYQ) are compositionally biased toward basic and acidic residues.

The protein belongs to the RNA polymerase beta chain family. As to quaternary structure, the RNAP catalytic core consists of 2 alpha, 1 beta, 1 beta' and 1 omega subunit. When a sigma factor is associated with the core the holoenzyme is formed, which can initiate transcription.

It catalyses the reaction RNA(n) + a ribonucleoside 5'-triphosphate = RNA(n+1) + diphosphate. In terms of biological role, DNA-dependent RNA polymerase catalyzes the transcription of DNA into RNA using the four ribonucleoside triphosphates as substrates. This Bifidobacterium longum (strain NCC 2705) protein is DNA-directed RNA polymerase subunit beta.